Reading from the N-terminus, the 136-residue chain is Small ribosomal subunit protein bS16 (136 aa).

It belongs to the bacterial ribosomal protein bS16 family.

The sequence is that of Small ribosomal subunit protein bS16 from Pseudarthrobacter chlorophenolicus (strain ATCC 700700 / DSM 12829 / CIP 107037 / JCM 12360 / KCTC 9906 / NCIMB 13794 / A6) (Arthrobacter chlorophenolicus).